Consider the following 351-residue polypeptide: Putative phospho-N-acetylmuramoyl-pentapeptide-transferase (351 aa).

10 helical membrane-spanning segments follow: residues 2–22 (MEFL…TLFI), 44–64 (AGTP…VTVL), 71–91 (LVLT…DDLL), 158–178 (GEKI…GAVG), 181–201 (GGFY…VGAI), 212–232 (GMAA…LGLS), 235–255 (ALPF…NRHP), 258–278 (IFMG…AVML), 281–301 (TVYF…VSLL), and 328–348 (IVLL…YMTG).

The protein belongs to the glycosyltransferase 4 family. MraY subfamily. Requires Mg(2+) as cofactor.

It is found in the cell membrane. It catalyses the reaction UDP-N-acetyl-alpha-D-muramoyl-L-alanyl-gamma-D-glutamyl-meso-2,6-diaminopimeloyl-D-alanyl-D-alanine + di-trans,octa-cis-undecaprenyl phosphate = di-trans,octa-cis-undecaprenyl diphospho-N-acetyl-alpha-D-muramoyl-L-alanyl-D-glutamyl-meso-2,6-diaminopimeloyl-D-alanyl-D-alanine + UMP. This Methanothermobacter thermautotrophicus (strain ATCC 29096 / DSM 1053 / JCM 10044 / NBRC 100330 / Delta H) (Methanobacterium thermoautotrophicum) protein is Putative phospho-N-acetylmuramoyl-pentapeptide-transferase.